Here is a 161-residue protein sequence, read N- to C-terminus: Regulator of ribonuclease activity A (161 aa).

The protein belongs to the RraA family. In terms of assembly, homotrimer. Binds to both RNA-binding sites in the C-terminal region of Rne and to RhlB.

The protein resides in the cytoplasm. Its function is as follows. Globally modulates RNA abundance by binding to RNase E (Rne) and regulating its endonucleolytic activity. Can modulate Rne action in a substrate-dependent manner by altering the composition of the degradosome. Modulates RNA-binding and helicase activities of the degradosome. The sequence is that of Regulator of ribonuclease activity A from Pseudoalteromonas atlantica (strain T6c / ATCC BAA-1087).